A 156-amino-acid polypeptide reads, in one-letter code: MSINATLFVQAIVFLILVWFTMQFVWPPIAKALDERAQKIADGLAAADRAKSELSAANQRVEKELSQARNETAARLADAERRAQAIIEEAKARATEEGNKLVAAARAEAEQQMVQAREALRAQVAVLAVKGAEQILRKEVDAGVHAGLLRRLQTEL.

A helical transmembrane segment spans residues 7-27 (LFVQAIVFLILVWFTMQFVWP).

It belongs to the ATPase B chain family. F-type ATPases have 2 components, F(1) - the catalytic core - and F(0) - the membrane proton channel. F(1) has five subunits: alpha(3), beta(3), gamma(1), delta(1), epsilon(1). F(0) has three main subunits: a(1), b(2) and c(10-14). The alpha and beta chains form an alternating ring which encloses part of the gamma chain. F(1) is attached to F(0) by a central stalk formed by the gamma and epsilon chains, while a peripheral stalk is formed by the delta and b chains.

It localises to the cell inner membrane. In terms of biological role, f(1)F(0) ATP synthase produces ATP from ADP in the presence of a proton or sodium gradient. F-type ATPases consist of two structural domains, F(1) containing the extramembraneous catalytic core and F(0) containing the membrane proton channel, linked together by a central stalk and a peripheral stalk. During catalysis, ATP synthesis in the catalytic domain of F(1) is coupled via a rotary mechanism of the central stalk subunits to proton translocation. Component of the F(0) channel, it forms part of the peripheral stalk, linking F(1) to F(0). The chain is ATP synthase subunit b from Verminephrobacter eiseniae (strain EF01-2).